Reading from the N-terminus, the 860-residue chain is Semaphorin-3aa (860 aa).

A signal peptide spans 1–17; the sequence is MDYLVGIFLLLCGVALP. The Sema domain maps to 31–515; the sequence is RLKLSYNEML…SDLGISQMPL (485 aa). N53 carries an N-linked (GlcNAc...) asparagine glycan. Residues C104 and C115 are joined by a disulfide bond. N126 carries N-linked (GlcNAc...) asparagine glycosylation. Intrachain disulfides connect C133–C142, C270–C382, C294–C342, and C518–C536. The Ig-like C2-type domain occupies 579 to 668; sequence GYSSVEERSV…FIQPLRRINL (90 aa). N593 carries an N-linked (GlcNAc...) asparagine glycan. C652 and C717 are disulfide-bonded. A disordered region spans residues 725–860; the sequence is KKPKGKKAPK…HEQQRPPRSV (136 aa). Polar residues-rich tracts occupy residues 748-764 and 782-818; these read TPQT…QRAQ and TGLQ…QPNQ. Positions 838–860 are enriched in basic and acidic residues; sequence QLQENKRGRNRRTHEQQRPPRSV.

Belongs to the semaphorin family.

It localises to the secreted. May influence outgrowth by a variety of growth cones including those of the posterior lateral line ganglion. The polypeptide is Semaphorin-3aa (sema3aa) (Danio rerio (Zebrafish)).